The sequence spans 105 residues: N(4)-acetylcytidine amidohydrolase (105 aa).

Positions 7–93 (TFFERFEHDI…VIAEIYPGLE (87 aa)) constitute an ASCH domain. K21 serves as the catalytic Proton acceptor. T24 acts as the Nucleophile in catalysis. The active-site Proton donor is the E74.

The protein belongs to the N(4)-acetylcytidine amidohydrolase family.

The catalysed reaction is N(4)-acetylcytidine + H2O = cytidine + acetate + H(+). It catalyses the reaction N(4)-acetyl-2'-deoxycytidine + H2O = 2'-deoxycytidine + acetate + H(+). It carries out the reaction N(4)-acetylcytosine + H2O = cytosine + acetate + H(+). Catalyzes the hydrolysis of N(4)-acetylcytidine (ac4C). The protein is N(4)-acetylcytidine amidohydrolase of Shewanella baltica (strain OS185).